Consider the following 133-residue polypeptide: Small ribosomal subunit protein uS8c (133 aa).

It belongs to the universal ribosomal protein uS8 family. In terms of assembly, part of the 30S ribosomal subunit.

It localises to the plastid. The protein resides in the chloroplast. One of the primary rRNA binding proteins, it binds directly to 16S rRNA central domain where it helps coordinate assembly of the platform of the 30S subunit. The sequence is that of Small ribosomal subunit protein uS8c (rps8) from Chlorokybus atmophyticus (Soil alga).